We begin with the raw amino-acid sequence, 261 residues long: MARGPKKHLKRLAAPHHWLLDKLSGCYAPRPSAGPHKLRESLPLIVFLRNRLKYALNGREVKAILMQRHVKVDGKVRTDTTYPAGFMDVITLDATNENFRLVYDVKGRFAVHRITDEEASYKLGKVKKVQLGKKGVPYVVTHDGRTIRYPDPNIKVNDTVKIDLASGKITDFIKFDAGKLVYVTGGRNLGRIGTIVHKERHDGGFDLVHIKDSLDNTFVTRLNNVFVIGEQGKPYISLPKGKGIKLSIAEERDRRRAQQGL.

Phosphoserine is present on serine 32. The 64-residue stretch at 42–105 (LPLIVFLRNR…NENFRLVYDV (64 aa)) folds into the S4 RNA-binding domain. A Glycyl lysine isopeptide (Lys-Gly) (interchain with G-Cter in ubiquitin) cross-link involves residue lysine 62. Threonine 115 is subject to Phosphothreonine. Residues lysine 134, lysine 161, lysine 168, lysine 174, lysine 179, lysine 211, and lysine 233 each participate in a glycyl lysine isopeptide (Lys-Gly) (interchain with G-Cter in ubiquitin) cross-link. At serine 247 the chain carries Phosphoserine.

The protein belongs to the eukaryotic ribosomal protein eS4 family. In terms of assembly, component of the small ribosomal subunit (SSU). Mature yeast ribosomes consist of a small (40S) and a large (60S) subunit. The 40S small subunit contains 1 molecule of ribosomal RNA (18S rRNA) and 33 different proteins (encoded by 57 genes). The large 60S subunit contains 3 rRNA molecules (25S, 5.8S and 5S rRNA) and 46 different proteins (encoded by 81 genes).

It is found in the cytoplasm. In terms of biological role, component of the ribosome, a large ribonucleoprotein complex responsible for the synthesis of proteins in the cell. The small ribosomal subunit (SSU) binds messenger RNAs (mRNAs) and translates the encoded message by selecting cognate aminoacyl-transfer RNA (tRNA) molecules. The large subunit (LSU) contains the ribosomal catalytic site termed the peptidyl transferase center (PTC), which catalyzes the formation of peptide bonds, thereby polymerizing the amino acids delivered by tRNAs into a polypeptide chain. The nascent polypeptides leave the ribosome through a tunnel in the LSU and interact with protein factors that function in enzymatic processing, targeting, and the membrane insertion of nascent chains at the exit of the ribosomal tunnel. This is Small ribosomal subunit protein eS4B from Saccharomyces cerevisiae (strain ATCC 204508 / S288c) (Baker's yeast).